A 150-amino-acid chain; its full sequence is UPF0756 membrane protein plu2726 (150 aa).

Helical transmembrane passes span 8-28, 51-71, 88-108, and 123-143; these read LLVL…TVTL, YGLT…IASG, LLAI…VSLM, and VLGV…AGIL.

It belongs to the UPF0756 family.

It localises to the cell membrane. This chain is UPF0756 membrane protein plu2726, found in Photorhabdus laumondii subsp. laumondii (strain DSM 15139 / CIP 105565 / TT01) (Photorhabdus luminescens subsp. laumondii).